We begin with the raw amino-acid sequence, 150 residues long: Flagellar assembly factor FliW (150 aa).

The protein belongs to the FliW family. In terms of assembly, interacts with translational regulator CsrA and flagellin(s).

The protein resides in the cytoplasm. Acts as an anti-CsrA protein, binds CsrA and prevents it from repressing translation of its target genes, one of which is flagellin. Binds to flagellin and participates in the assembly of the flagellum. The protein is Flagellar assembly factor FliW of Leptospira borgpetersenii serovar Hardjo-bovis (strain L550).